Consider the following 257-residue polypeptide: GTP cyclohydrolase FolE2 (257 aa).

It belongs to the GTP cyclohydrolase IV family.

The catalysed reaction is GTP + H2O = 7,8-dihydroneopterin 3'-triphosphate + formate + H(+). It participates in cofactor biosynthesis; 7,8-dihydroneopterin triphosphate biosynthesis; 7,8-dihydroneopterin triphosphate from GTP: step 1/1. Functionally, converts GTP to 7,8-dihydroneopterin triphosphate. In Syntrophobacter fumaroxidans (strain DSM 10017 / MPOB), this protein is GTP cyclohydrolase FolE2.